The chain runs to 86 residues: Protein Vpu (86 aa).

At 1–12 (MLELIGRIDYRL) the chain is on the extracellular side. The chain crosses the membrane as a helical span at residues 13 to 33 (GVGALIVALIIVIIVWTIAYI). The Cytoplasmic segment spans residues 34–86 (EYRKLVRQRRIDWLVKRIKERAEDSGNESGGDTEELETMVDMGHLRLLDGNDL). Phosphoserine; by host CK2 occurs at positions 58 and 62.

It belongs to the HIV-1 VPU protein family. As to quaternary structure, homopentamer. Interacts with host CD4 and BRTC; these interactions induce proteasomal degradation of CD4. Interacts with host BST2; this interaction leads to the degradation of host BST2. Interacts with host FBXW11. Interacts with host AP1M1; this interaction plays a role in the mistrafficking and subsequent degradation of host BST2. Interacts with host RANBP2; this interaction allows Vpu to down-regulate host BLM sumoylation. In terms of processing, phosphorylated by host CK2. This phosphorylation is necessary for interaction with human BTRC and degradation of CD4.

The protein localises to the host membrane. Ion channel activity is inhibited by hexamethylene amiloride in vitro. In terms of biological role, enhances virion budding, by targeting human CD4 and Tetherin/BST2 to proteasome degradation. Degradation of CD4 prevents any unwanted premature interactions between viral Env and its host receptor CD4 in the endoplasmic reticulum. Degradation of antiretroviral protein Tetherin/BST2 is important for virion budding, as BST2 tethers new viral particles to the host cell membrane. Mechanistically, Vpu bridges either CD4 or BST2 to BTRC, a substrate recognition subunit of the Skp1/Cullin/F-box protein E3 ubiquitin ligase, induces their ubiquitination and subsequent proteasomal degradation. The alteration of the E3 ligase specificity by Vpu seems to promote the degradation of host IKBKB, leading to NF-kappa-B down-regulation and subsequent apoptosis. Acts as a viroporin that forms an oligomeric ion channel in membranes. Modulates the host DNA repair mechanisms to promote degradation of nuclear viral cDNA in cells that are already productively infected in order to suppress immune sensing and proviral hyper-integration (superinfection). Manipulates PML-NBs and modulates SUMOylation of host BLM protein thereby enhancing its DNA-end processing activity toward viral unintegrated linear DNA. Also inhibits RAD52-mediated homologous repair of viral cDNA, preventing the generation of dead-end circular forms of single copies of the long terminal repeat and permitting sustained nucleolytic attack. This Homo sapiens (Human) protein is Protein Vpu.